The sequence spans 335 residues: Pyridoxal 5'-phosphate synthase subunit PdxS (335 aa).

D59 provides a ligand contact to D-ribose 5-phosphate. Residue K116 is the Schiff-base intermediate with D-ribose 5-phosphate of the active site. D-ribose 5-phosphate is bound at residue G188. K200 serves as a coordination point for D-glyceraldehyde 3-phosphate. D-ribose 5-phosphate is bound by residues G253 and 274–275 (GS).

It belongs to the PdxS/SNZ family. In terms of assembly, in the presence of PdxT, forms a dodecamer of heterodimers.

The enzyme catalyses aldehydo-D-ribose 5-phosphate + D-glyceraldehyde 3-phosphate + L-glutamine = pyridoxal 5'-phosphate + L-glutamate + phosphate + 3 H2O + H(+). It functions in the pathway cofactor biosynthesis; pyridoxal 5'-phosphate biosynthesis. Its function is as follows. Catalyzes the formation of pyridoxal 5'-phosphate from ribose 5-phosphate (RBP), glyceraldehyde 3-phosphate (G3P) and ammonia. The ammonia is provided by the PdxT subunit. Can also use ribulose 5-phosphate and dihydroxyacetone phosphate as substrates, resulting from enzyme-catalyzed isomerization of RBP and G3P, respectively. The polypeptide is Pyridoxal 5'-phosphate synthase subunit PdxS (Hyperthermus butylicus (strain DSM 5456 / JCM 9403 / PLM1-5)).